A 406-amino-acid polypeptide reads, in one-letter code: MSEKVVLAYSGGLDTSAAVKWLQEKYGMDVIAVTIDVGNEKDFTLIKEKALKVGAKKAYVRDVRKEFAEDYIWKAIKANSMYEGVYPLATALARPLIAKVMVDIAMEEGATAIAHGCTGKGNDQVRFDVGINTLAPHLKIIAPARQWGMTREQTMEYAQKWGIPVPISVKNPFSIDENLWGRSIECGLLEDPWNEPIPEVFAWTRPVEATPDAPEYLEVEFEQGVPVAVNGEKLSPLALIQKVHDIAGLHGVGRIDHVENRLVGIKSREIYEAPAAVVLIAAHQALEAMTLSKSQLRFKQMVEATYSDIIYNGLWFSALRQDLDAFIESSQRFVSGTVRLKLSKGSFRVVGRKSPYSLYHKGMATYDKGDQFDPSSAVGFITLWGLQAKLQAQLQPILEEEKGNKS.

Position 8-16 (8-16 (AYSGGLDTS)) interacts with ATP. Tyr86 contacts L-citrulline. Gly116 is an ATP binding site. L-aspartate contacts are provided by Thr118, Asn122, and Asp123. Position 122 (Asn122) interacts with L-citrulline. L-citrulline contacts are provided by Arg126, Ser174, Ser183, Glu259, and Tyr271.

It belongs to the argininosuccinate synthase family. Type 1 subfamily. As to quaternary structure, homotetramer.

The protein resides in the cytoplasm. It catalyses the reaction L-citrulline + L-aspartate + ATP = 2-(N(omega)-L-arginino)succinate + AMP + diphosphate + H(+). The protein operates within amino-acid biosynthesis; L-arginine biosynthesis; L-arginine from L-ornithine and carbamoyl phosphate: step 2/3. This chain is Argininosuccinate synthase, found in Dehalococcoides mccartyi (strain ATCC BAA-2266 / KCTC 15142 / 195) (Dehalococcoides ethenogenes (strain 195)).